The sequence spans 427 residues: Glutamyl-tRNA reductase (427 aa).

Residues 49–52, Ser105, 110–112, and Gln116 each bind substrate; these read TCNR and EPQ. Cys50 serves as the catalytic Nucleophile. 185-190 contacts NADP(+); that stretch reads AAGEMN.

This sequence belongs to the glutamyl-tRNA reductase family. Homodimer.

It catalyses the reaction (S)-4-amino-5-oxopentanoate + tRNA(Glu) + NADP(+) = L-glutamyl-tRNA(Glu) + NADPH + H(+). Its pathway is porphyrin-containing compound metabolism; protoporphyrin-IX biosynthesis; 5-aminolevulinate from L-glutamyl-tRNA(Glu): step 1/2. In terms of biological role, catalyzes the NADPH-dependent reduction of glutamyl-tRNA(Glu) to glutamate 1-semialdehyde (GSA). The sequence is that of Glutamyl-tRNA reductase from Acinetobacter baumannii (strain AB307-0294).